Reading from the N-terminus, the 1858-residue chain is Inactive histone-lysine N-methyltransferase 2E (1858 aa).

An HCFC1-binding motif (HBM) motif is present at residues 63-66; the sequence is DHNY. A PHD-type zinc finger spans residues 118–166; sequence VTRCICGFTHDDGYMICCDKCSVWQHIDCMGIDRQHIPDTYLCERCQPR. Cysteine 121, cysteine 123, cysteine 135, cysteine 138, histidine 143, cysteine 146, cysteine 160, and cysteine 163 together coordinate Zn(2+). The segment at 217–269 is disordered; sequence ASRVSKVNDKRRKKSGEKEQHISKCKKAFREGSRKSSRVKGSAPEIDPSSDGS. Positions 232–250 are enriched in basic and acidic residues; it reads GEKEQHISKCKKAFREGSR. The 118-residue stretch at 330 to 447 folds into the SET domain; the sequence is PPVESHIQKN…KGTEITIAFD (118 aa). Serine 435 carries O-linked (GlcNAc) serine glycosylation. Residue threonine 440 is glycosylated (O-linked (GlcNAc) threonine). The tract at residues 475 to 530 is disordered; it reads SESMENINSGYETRRKKGKKDKDISKEKDTQNQNITLDCEGTTNKMKSPETKQRKL. The segment covering 494 to 504 has biased composition (basic and acidic residues); sequence KDKDISKEKDT. Residues 505–520 are compositionally biased toward polar residues; the sequence is QNQNITLDCEGTTNKM. The stretch at 559–615 forms a coiled coil; it reads VEMESEEQIAERKRKMTREERKMEAILQAFARLEKREKRREQALERISTAKTEVKTE. At serine 623 the chain carries Phosphoserine. The disordered stretch occupies residues 630–687; sequence EQAKEENASKPTPAKVNRTKQRKSFSRSRTHIGQQRRRHRTVSMCSDIQPSSPDIEVT. Basic residues predominate over residues 646 to 670; it reads NRTKQRKSFSRSRTHIGQQRRRHRT. The segment covering 672–687 has biased composition (polar residues); sequence SMCSDIQPSSPDIEVT. Serine 837 and serine 845 each carry phosphoserine. Composition is skewed to low complexity over residues 887 to 901 and 933 to 957; these read TSTP…PTHT and PVTP…PESS. Disordered regions lie at residues 887–960 and 1039–1068; these read TSTP…SPEI and LETP…SSWV. Positions 1039-1048 are enriched in basic and acidic residues; that stretch reads LETPAHDRAE. Polar residues predominate over residues 1049 to 1068; that stretch reads PNSQLDSTHSGRGTMYSSWV. Serine 1070 carries the post-translational modification Phosphoserine. Disordered regions lie at residues 1164–1561 and 1581–1835; these read KRQR…QNQQ and VFTS…PVPG. Polar residues-rich tracts occupy residues 1186-1206 and 1222-1235; these read PHAS…NDNG and TVYN…SNNC. A Phosphoserine modification is found at serine 1273. The segment covering 1273–1282 has biased composition (basic and acidic residues); sequence SDHRKDKDSG. Low complexity-rich tracts occupy residues 1285–1303 and 1349–1362; these read SPCV…SSHS and KSPP…SPGS. Phosphoserine is present on serine 1359. Polar residues-rich tracts occupy residues 1400–1432 and 1506–1542; these read QQKQ…SQKL and LPAN…LNST. The span at 1543–1553 shows a compositional bias: pro residues; that stretch reads APPPPPPPPPS. The span at 1581–1599 shows a compositional bias: polar residues; that stretch reads VFTSGPNQALPGTTSQQTV. The span at 1626-1637 shows a compositional bias: pro residues; sequence VPPPPPPPPAPG. Residues 1642–1651 show a composition bias toward polar residues; it reads QQPNSHQQHS. A compositionally biased stretch (pro residues) spans 1677–1687; sequence LPPPPPPPGPA. The segment covering 1698–1711 has biased composition (polar residues); sequence TGLQGLQAQHQHVV. Positions 1714–1724 are enriched in pro residues; that stretch reads APPPPPPPPPS. Residues 1798–1808 show a composition bias toward polar residues; the sequence is QGPNSIPTPTA.

This sequence belongs to the class V-like SAM-binding methyltransferase superfamily. Histone-lysine methyltransferase family. TRX/MLL subfamily. As to quaternary structure, component of a complex composed of KMT2E (isoform 3), OGT and USP7; the complex stabilizes KMT2E, preventing KMT2E ubiquitination and proteasomal-mediated degradation. Isoform 3 interacts (via N-terminus) with OGT (via TRP repeats). Isoform 3 interacts with deubiquitinating enzyme USP7 (via MATH domain). Isoform 3 interacts (via HBM motif) with HCFC1 (via Kelch domain). Isoform 3 interacts with E2F1; the interaction is probably indirect and is mediated via HCFC1. In terms of processing, ubiquitinated. Deubiquitinated by USP7. O-glycosylated at Ser-435 and Thr-440 in the SET domain by OGT which probably prevents KMT2E proteasomal-mediated degradation. As to expression, widely expressed in both adult and fetal tissues. Highest levels of expression observed in fetal thymus and kidney and in adult hematopoietic tissues, jejunum and cerebellum. Isoform NKp44L: Not detected on circulating cells from healthy individuals, but is expressed on a large panel of tumor and transformed cells.

It is found in the chromosome. The protein localises to the cytoplasm. Its subcellular location is the cytoskeleton. The protein resides in the microtubule organizing center. It localises to the centrosome. It is found in the nucleus speckle. The protein localises to the nucleus. Its subcellular location is the nucleoplasm. The protein resides in the cell membrane. Its function is as follows. Associates with chromatin regions downstream of transcriptional start sites of active genes and thus regulates gene transcription. Chromatin interaction is mediated via the binding to tri-methylated histone H3 at 'Lys-4' (H3K4me3). Key regulator of hematopoiesis involved in terminal myeloid differentiation and in the regulation of hematopoietic stem cell (HSCs) self-renewal by a mechanism that involves DNA methylation. Also acts as an important cell cycle regulator, participating in cell cycle regulatory network machinery at multiple cell cycle stages including G1/S transition, S phase progression and mitotic entry. Recruited to E2F1 responsive promoters by HCFC1 where it stimulates tri-methylation of histone H3 at 'Lys-4' and transcriptional activation and thereby facilitates G1 to S phase transition. During myoblast differentiation, required to suppress inappropriate expression of S-phase-promoting genes and maintain expression of determination genes in quiescent cells. Functionally, cellular ligand for NCR2/NKp44, may play a role as a danger signal in cytotoxicity and NK-cell-mediated innate immunity. The polypeptide is Inactive histone-lysine N-methyltransferase 2E (KMT2E) (Homo sapiens (Human)).